A 156-amino-acid polypeptide reads, in one-letter code: Probable succinate transporter subunit YjjB (156 aa).

Helical transmembrane passes span 7-27 (WALLQDMVLAAVPALGFAMVF), 54-74 (FGMNIEWASFLAAILIGIIGI), 86-106 (VFTVAAVIPMFPGISAYTAMI), and 128-148 (FLKASFIVGALSIGLSLPGIW).

This sequence belongs to the ThrE exporter (TC 2.A.79) family. As to quaternary structure, the transporter is composed of YjjB and YjjP.

The protein resides in the cell inner membrane. Involved in succinate export with YjjP. Both proteins are required for export. This is Probable succinate transporter subunit YjjB from Pectobacterium atrosepticum (strain SCRI 1043 / ATCC BAA-672) (Erwinia carotovora subsp. atroseptica).